The sequence spans 86 residues: Polcalcin Che a 3 (86 aa).

EF-hand domains follow at residues 8–43 (QDIADRERIFKRFDTNGDGKISSSELGDALKTLGSV) and 43–78 (VTPDEVRRMMAEIDTDGDGFISFDEFTDFARANRGL). Positions 21, 23, 25, 27, 32, 56, 58, 60, and 67 each coordinate Ca(2+).

In Chenopodium album (Fat hen), this protein is Polcalcin Che a 3.